We begin with the raw amino-acid sequence, 84 residues long: Mitochondrial import inner membrane translocase subunit Tim9 (84 aa).

The short motif at 28 to 52 is the Twin CX3C motif element; the sequence is CFMDCVKDFTTREVKPEETTCSESC. Intrachain disulfides connect Cys-28–Cys-52 and Cys-32–Cys-48.

Belongs to the small Tim family. In terms of assembly, heterohexamer; composed of 3 copies of TIMM9 and 3 copies of TIMM10/TIM10A, named soluble 70 kDa complex. The complex forms a 6-bladed alpha-propeller structure and associates with the TIMM22 component of the TIM22 complex. Interacts with multi-pass transmembrane proteins in transit.

The protein localises to the mitochondrion inner membrane. Functionally, mitochondrial intermembrane chaperone that participates in the import and insertion of multi-pass transmembrane proteins into the mitochondrial inner membrane. May also be required for the transfer of beta-barrel precursors from the TOM complex to the sorting and assembly machinery (SAM complex) of the outer membrane. Acts as a chaperone-like protein that protects the hydrophobic precursors from aggregation and guide them through the mitochondrial intermembrane space. The sequence is that of Mitochondrial import inner membrane translocase subunit Tim9 (timm9) from Danio rerio (Zebrafish).